We begin with the raw amino-acid sequence, 769 residues long: Homoaconitase, mitochondrial (769 aa).

Residues 1–28 (MQSRLLPSGPGRRWISLRVPNTPQRRAF) constitute a mitochondrion transit peptide. Positions 391, 460, and 463 each coordinate [4Fe-4S] cluster.

Belongs to the aconitase/IPM isomerase family. The cofactor is [4Fe-4S] cluster.

The protein localises to the mitochondrion. It catalyses the reaction (2R,3S)-homoisocitrate = cis-homoaconitate + H2O. It functions in the pathway amino-acid biosynthesis; L-lysine biosynthesis via AAA pathway; L-alpha-aminoadipate from 2-oxoglutarate: step 3/5. Its function is as follows. Catalyzes the reversible hydration of cis-homoaconitate to (2R,3S)-homoisocitrate, a step in the alpha-aminoadipate pathway for lysine biosynthesis. The sequence is that of Homoaconitase, mitochondrial (lysA) from Aspergillus niger (strain ATCC MYA-4892 / CBS 513.88 / FGSC A1513).